The chain runs to 304 residues: Non-specific ribonucleoside hydrolase RihC (304 aa).

His233 is a catalytic residue.

The protein belongs to the IUNH family. RihC subfamily.

In terms of biological role, hydrolyzes both purine and pyrimidine ribonucleosides with a broad-substrate specificity. The protein is Non-specific ribonucleoside hydrolase RihC of Escherichia coli O127:H6 (strain E2348/69 / EPEC).